Consider the following 736-residue polypeptide: MDAKTDDKGAGKCPFSGGSHGHRNRDWWPDQLDISVLHNNSKKSDPMGAAFNYAEEFKKLDLEAVKKDLHALMTDSQEWWPADFGHYGGLFVRMAWHSAGTYRITDGRGGAGAGQQRFAPLNSWPDNANLDKARRLLWPIKQKYGSKISWADLMVLTGNVALESMGFKTFGFAGGRADVWEPEELYWGPEGTWLGDERYSGERQLAEPLGAVQMGLIYVNPEGPNGNPDPVAAAKDIRETFARMAMDDEETVALIAGGHTFGKTHGAGDPSLIGPAPEGGLLEEQGLGWTSKYGTGFGADAITGGPEVIWTQTPTQWSNHFFENLFGFEWELDKSPAGAKQWKAKGAEATVPDPFDPAKKRVPTMLTTDLSLRFDPIYEKISRRFLENPDQFADAFARAWFKLTHRDMGPRERYLGPEVPKEELIWQDPIPAVNHELVGEADIEALKAKILASGLSVAQLVSTAWASASTFRGSDKRGGANGARIRLAPQKDWEVNQPAELAQVLGKLEAIQGEFNGAQKDGKKVSLADLIVLGGAAAIEKAAKDAGTAVKVPFTPGRMDASAEQTDVESFKVLEPRADGFRNYINTKRHQFMHPEEALVDKAQLLTLTGPELTVLVGGLRVLGANYAHSTHGVLTERPEKLTNDFFVNLLDMGTKWTKANGEVEIYEGRDRKNGELKWTGTRVDLVFGSHSQLRAFAEVYACSDAQEKFVSDFVAAWSKVMNADRFDIVAKKQAA.

The span at 1–10 (MDAKTDDKGA) shows a compositional bias: basic and acidic residues. Residues 1–26 (MDAKTDDKGAGKCPFSGGSHGHRNRD) form a disordered region. Residues 96 to 218 (WHSAGTYRIT…LGAVQMGLIY (123 aa)) constitute a cross-link (tryptophyl-tyrosyl-methioninium (Trp-Tyr) (with M-244)). The Proton acceptor role is filled by His97. The tryptophyl-tyrosyl-methioninium (Tyr-Met) (with W-96) cross-link spans 218–244 (YVNPEGPNGNPDPVAAAKDIRETFARM). Residue His259 coordinates heme b.

Belongs to the peroxidase family. Peroxidase/catalase subfamily. As to quaternary structure, homodimer or homotetramer. Requires heme b as cofactor. Formation of the three residue Trp-Tyr-Met cross-link is important for the catalase, but not the peroxidase activity of the enzyme.

The catalysed reaction is H2O2 + AH2 = A + 2 H2O. It carries out the reaction 2 H2O2 = O2 + 2 H2O. Functionally, bifunctional enzyme with both catalase and broad-spectrum peroxidase activity. In Rhodopseudomonas palustris (strain ATCC BAA-98 / CGA009), this protein is Catalase-peroxidase.